The following is a 594-amino-acid chain: Probable pectinesterase/pectinesterase inhibitor 33 (594 aa).

The N-terminal stretch at 1-22 is a signal peptide; sequence MLRGIFHICLLASFLLLPFSSA. The disordered stretch occupies residues 28-75; it reads FTGGTDAPPPWDHNVSPPPETAPSPTPTSSPSTTSPPSPGPVAAPSPI. A compositionally biased stretch (pro residues) spans 34–71; it reads APPPWDHNVSPPPETAPSPTPTSSPSTTSPPSPGPVAA. N-linked (GlcNAc...) asparagine glycosylation is found at N77, N170, N213, and N226. Residues 78-237 are pectinesterase inhibitor 33; sequence GSVSGDMTWW…SDLIGNCLAV (160 aa). The tract at residues 280 to 581 is pectinesterase 33; that stretch reads HLVVAQDRSG…TVGSLIAGGS (302 aa). 2 residues coordinate substrate: T356 and Q386. The active-site Proton donor; for pectinesterase activity is D409. A disulfide bond links C423 and C443. The Nucleophile; for pectinesterase activity role is filled by D430. The substrate site is built by R498 and W500.

This sequence in the N-terminal section; belongs to the PMEI family. It in the C-terminal section; belongs to the pectinesterase family. Expressed in siliques.

It localises to the secreted. The protein resides in the cell wall. The enzyme catalyses [(1-&gt;4)-alpha-D-galacturonosyl methyl ester](n) + n H2O = [(1-&gt;4)-alpha-D-galacturonosyl](n) + n methanol + n H(+). Its pathway is glycan metabolism; pectin degradation; 2-dehydro-3-deoxy-D-gluconate from pectin: step 1/5. In terms of biological role, acts in the modification of cell walls via demethylesterification of cell wall pectin. The chain is Probable pectinesterase/pectinesterase inhibitor 33 (PME33) from Arabidopsis thaliana (Mouse-ear cress).